A 342-amino-acid polypeptide reads, in one-letter code: MEKYEKLAKIGEGSYGVVFKCRNKSSGQVVAIKKFVESEDDRVVRKIALREIRMLKQLKHPNLVNLIEVFRRKRKMHLVFEYCDHTLLNELERNPNGVSDGVIKSVLWQTLQALNFCHKHNCIHRDVKPENILITKQGMIKICDFGFARILIPGDAYTDYVATRWYRAPELLVGDTKYGSSVDVWAVGCVFAELLTGQPLWPGKSDVDQLYLIIRTLGKLIPRHQSIFRSNQFFRGISIPEPEDMETLEEKFSNVQPVALSFMKGCLKMNPDERLTCAQLLDSAYFESFQEDQMKRKARSEGRSRRRQQNQLLPLIPGSHISPTPDGRKQVVQLKFDHLPNI.

The Protein kinase domain occupies 4–286 (YEKLAKIGEG…CAQLLDSAYF (283 aa)). ATP is bound by residues 10–18 (IGEGSYGVV) and lysine 33. The [NKR]KIAxRE signature appears at 45–51 (RKIALRE). Catalysis depends on aspartate 126, which acts as the Proton acceptor. The interval 295–328 (KRKARSEGRSRRRQQNQLLPLIPGSHISPTPDGR) is disordered.

This sequence belongs to the protein kinase superfamily. CMGC Ser/Thr protein kinase family. CDC2/CDKX subfamily.

The protein resides in the cytoplasm. It carries out the reaction L-seryl-[protein] + ATP = O-phospho-L-seryl-[protein] + ADP + H(+). The catalysed reaction is L-threonyl-[protein] + ATP = O-phospho-L-threonyl-[protein] + ADP + H(+). The protein is Cyclin-dependent kinase-like 4 (Cdkl4) of Mus musculus (Mouse).